The sequence spans 159 residues: NADH-quinone oxidoreductase subunit I (159 aa).

2 consecutive 4Fe-4S ferredoxin-type domains span residues 51–80 and 90–119; these read RRYE…IEAE and TRYD…EGPN. [4Fe-4S] cluster is bound by residues Cys-60, Cys-63, Cys-66, Cys-70, Cys-99, Cys-102, Cys-105, and Cys-109.

The protein belongs to the complex I 23 kDa subunit family. In terms of assembly, NDH-1 is composed of 14 different subunits. Subunits NuoA, H, J, K, L, M, N constitute the membrane sector of the complex. The cofactor is [4Fe-4S] cluster.

The protein localises to the cell inner membrane. The catalysed reaction is a quinone + NADH + 5 H(+)(in) = a quinol + NAD(+) + 4 H(+)(out). Functionally, NDH-1 shuttles electrons from NADH, via FMN and iron-sulfur (Fe-S) centers, to quinones in the respiratory chain. The immediate electron acceptor for the enzyme in this species is believed to be ubiquinone. Couples the redox reaction to proton translocation (for every two electrons transferred, four hydrogen ions are translocated across the cytoplasmic membrane), and thus conserves the redox energy in a proton gradient. This Rickettsia canadensis (strain McKiel) protein is NADH-quinone oxidoreductase subunit I.